Consider the following 1941-residue polypeptide: Diacylglycerol kinase eta (1941 aa).

Residues 93–186 form the PH domain; the sequence is SIIKEGYLLK…WLGSLKAATA (94 aa). 2 consecutive Phorbol-ester/DAG-type zinc fingers follow at residues 206-256 and 279-330; these read HHHW…IANC and PHQW…AIAC. The DAGKc domain occupies 361–497; the sequence is GNFSPLLVFV…DRWSIMVFEK (137 aa). Disordered stretches follow at residues 1030-1068, 1132-1164, 1215-1257, and 1276-1295; these read TTTL…SPPR, CNSN…ETPT, LESA…PSSS, and RRHS…KDKD. The span at 1133-1155 shows a compositional bias: low complexity; sequence NSNNNSNNNSNSNSNNNNHNDGN. Residues 1878–1941 enclose the SAM domain; sequence WSVNEVVTWL…LQAIKDLSEN (64 aa).

It belongs to the eukaryotic diacylglycerol kinase family.

The protein resides in the cytoplasm. It catalyses the reaction a 1,2-diacyl-sn-glycerol + ATP = a 1,2-diacyl-sn-glycero-3-phosphate + ADP + H(+). In terms of biological role, phosphorylates diacylglycerol (DAG) to generate phosphatidic acid (PA). The polypeptide is Diacylglycerol kinase eta (Drosophila grimshawi (Hawaiian fruit fly)).